Reading from the N-terminus, the 529-residue chain is uncharacterized protein (529 aa).

Positions 1-20 (MYFLILILVLLLIMVAAATA) are cleaved as a signal peptide.

This is an uncharacterized protein from Orgyia pseudotsugata multicapsid polyhedrosis virus (OpMNPV).